Consider the following 164-residue polypeptide: HTH-type transcriptional regulator IscR (164 aa).

In terms of domain architecture, HTH rrf2-type spans 2–131; that stretch reads RLTSKGRYAV…NNITLAELVN (130 aa). The segment at residues 28-51 is a DNA-binding region (H-T-H motif); the sequence is LADISERQGISLSYLEQLFSRLRK. The [2Fe-2S] cluster site is built by Cys-92, Cys-98, and Cys-104. Cys-92, Cys-98, and Cys-104 together coordinate a metal cation. The tract at residues 145-164 is disordered; the sequence is DTRRTANGRPQETINVNLRA. A compositionally biased stretch (polar residues) spans 152–164; sequence GRPQETINVNLRA.

[2Fe-2S] cluster serves as cofactor.

Its function is as follows. Regulates the transcription of several operons and genes involved in the biogenesis of Fe-S clusters and Fe-S-containing proteins. This Serratia proteamaculans (strain 568) protein is HTH-type transcriptional regulator IscR.